The chain runs to 120 residues: Ribonuclease P protein component (120 aa).

Belongs to the RnpA family. As to quaternary structure, consists of a catalytic RNA component (M1 or rnpB) and a protein subunit.

The enzyme catalyses Endonucleolytic cleavage of RNA, removing 5'-extranucleotides from tRNA precursor.. In terms of biological role, RNaseP catalyzes the removal of the 5'-leader sequence from pre-tRNA to produce the mature 5'-terminus. It can also cleave other RNA substrates such as 4.5S RNA. The protein component plays an auxiliary but essential role in vivo by binding to the 5'-leader sequence and broadening the substrate specificity of the ribozyme. This is Ribonuclease P protein component from Thioalkalivibrio sulfidiphilus (strain HL-EbGR7).